Reading from the N-terminus, the 134-residue chain is Small ribosomal subunit protein uS8c (134 aa).

This sequence belongs to the universal ribosomal protein uS8 family. In terms of assembly, part of the 30S ribosomal subunit.

It is found in the plastid. Its function is as follows. One of the primary rRNA binding proteins, it binds directly to 16S rRNA central domain where it helps coordinate assembly of the platform of the 30S subunit. This chain is Small ribosomal subunit protein uS8c (rps8), found in Cuscuta obtusiflora (Peruvian dodder).